Consider the following 1180-residue polypeptide: Pesticidal crystal protein Cry4Aa (1180 aa).

The protein belongs to the delta endotoxin family.

Functionally, promotes colloidosmotic lysis by binding to the midgut epithelial cells of insects. The sequence is that of Pesticidal crystal protein Cry4Aa (cry4Aa) from Bacillus thuringiensis subsp. israelensis.